Here is a 350-residue protein sequence, read N- to C-terminus: Ferredoxin--NADP reductase (350 aa).

FAD contacts are provided by D49, Q57, Y62, V102, F136, D303, and T344.

This sequence belongs to the ferredoxin--NADP reductase type 2 family. Homodimer. The cofactor is FAD.

The catalysed reaction is 2 reduced [2Fe-2S]-[ferredoxin] + NADP(+) + H(+) = 2 oxidized [2Fe-2S]-[ferredoxin] + NADPH. This chain is Ferredoxin--NADP reductase, found in Granulibacter bethesdensis (strain ATCC BAA-1260 / CGDNIH1).